Reading from the N-terminus, the 199-residue chain is Holliday junction branch migration complex subunit RuvA (199 aa).

The tract at residues 1 to 64 (MIGRLRGILL…DDAHLLYAFA (64 aa)) is domain I. The interval 65–143 (SEKERGLFRS…DMPESGVAGM (79 aa)) is domain II. A flexible linker region spans residues 144 to 150 (RPDRVDG). The segment at 151–199 (SAPGTVAEAVSALVALGYKPNEASRAVRRLDTEALTTEEIIRQALQRML) is domain III.

Belongs to the RuvA family. As to quaternary structure, homotetramer. Forms an RuvA(8)-RuvB(12)-Holliday junction (HJ) complex. HJ DNA is sandwiched between 2 RuvA tetramers; dsDNA enters through RuvA and exits via RuvB. An RuvB hexamer assembles on each DNA strand where it exits the tetramer. Each RuvB hexamer is contacted by two RuvA subunits (via domain III) on 2 adjacent RuvB subunits; this complex drives branch migration. In the full resolvosome a probable DNA-RuvA(4)-RuvB(12)-RuvC(2) complex forms which resolves the HJ.

Its subcellular location is the cytoplasm. Its function is as follows. The RuvA-RuvB-RuvC complex processes Holliday junction (HJ) DNA during genetic recombination and DNA repair, while the RuvA-RuvB complex plays an important role in the rescue of blocked DNA replication forks via replication fork reversal (RFR). RuvA specifically binds to HJ cruciform DNA, conferring on it an open structure. The RuvB hexamer acts as an ATP-dependent pump, pulling dsDNA into and through the RuvAB complex. HJ branch migration allows RuvC to scan DNA until it finds its consensus sequence, where it cleaves and resolves the cruciform DNA. This chain is Holliday junction branch migration complex subunit RuvA, found in Nitrosococcus oceani (strain ATCC 19707 / BCRC 17464 / JCM 30415 / NCIMB 11848 / C-107).